Here is a 59-residue protein sequence, read N- to C-terminus: MYLFYVLLSSLFLSALIYVIGKSHPNLFMFISLFVNVVTILYLVFKDYGQYIIAKPINT.

A signal peptide spans 1–21; sequence MYLFYVLLSSLFLSALIYVIG. Residues 22–24 are Extracellular-facing; it reads KSH. Residues 25–45 form a helical membrane-spanning segment; it reads PNLFMFISLFVNVVTILYLVF. The Cytoplasmic segment spans residues 46 to 59; sequence KDYGQYIIAKPINT.

Its subcellular location is the host membrane. This is an uncharacterized protein from Acidianus convivator (ABV).